Consider the following 326-residue polypeptide: DNA-directed RNA polymerase subunit alpha (326 aa).

Residues 1–231 (MQTALLKPKI…DQLSVFAALE (231 aa)) form an alpha N-terminal domain (alpha-NTD) region. The tract at residues 247-326 (IDPILLRPVD…ENWPPAGLEK (80 aa)) is alpha C-terminal domain (alpha-CTD).

This sequence belongs to the RNA polymerase alpha chain family. Homodimer. The RNAP catalytic core consists of 2 alpha, 1 beta, 1 beta' and 1 omega subunit. When a sigma factor is associated with the core the holoenzyme is formed, which can initiate transcription.

The enzyme catalyses RNA(n) + a ribonucleoside 5'-triphosphate = RNA(n+1) + diphosphate. Its function is as follows. DNA-dependent RNA polymerase catalyzes the transcription of DNA into RNA using the four ribonucleoside triphosphates as substrates. The polypeptide is DNA-directed RNA polymerase subunit alpha (Cupriavidus metallidurans (strain ATCC 43123 / DSM 2839 / NBRC 102507 / CH34) (Ralstonia metallidurans)).